The sequence spans 888 residues: Transmembrane channel-like protein 2 (888 aa).

Positions 1–128 (MSPQLKSLDE…SLGSSVSTGD (128 aa)) are disordered. At 1–228 (MSPQLKSLDE…KIKDIESHFG (228 aa)) the chain is on the cytoplasmic side. Composition is skewed to basic and acidic residues over residues 7-16 (SLDEEGDKSA), 32-44 (DGHR…KDPA), and 87-110 (RTSL…EAGK). Polar residues predominate over residues 117–128 (STSLGSSVSTGD). The chain crosses the membrane as a helical span at residues 229–266 (SSVASYFIFLRWMYGVNLVLFGLIFGLVIIPEVLMGMP). Over 267–317 (YGSIPRKTVPRAEEERAMDFSVLWDFEGYIKYSALFYGYYNNQRTIGWLRY) the chain is Extracellular. A helical transmembrane segment spans residues 318–350 (RLPMAYFMVGVSVFGYSLMIVIRSMASNTQGST). Residues 351-406 (SEGDSDSFTFSFKMFTSWDYLIGNSETADNKYVSITTSFKESIVDEQESNKEGNIH) lie on the Cytoplasmic side of the membrane. Residues 407–437 (LTRFLRVLANFLILCCLCGSGYLIYFVVKRS) traverse the membrane as a helical segment. At 438–447 (QEFSKMQNVS) the chain is on the extracellular side. The helical transmembrane segment at 448 to 475 (WYERNEVEIVMSLLGMFCPPLFETIAAL) threads the bilayer. Over 476 to 479 (ENYH) the chain is Cytoplasmic. The chain crosses the membrane as a helical span at residues 480–514 (PRTGLKWQLGRIFALFLGNLYTFLLALMDDVHLKL). Topologically, residues 515–556 (SNEEKIKNITHWTLFNYYNSSGGNESVPRPPPHPADVPRGSC) are extracellular. A helical membrane pass occupies residues 557 to 594 (WETAVGIEFMRLTVSDMLVTYLTILVGDFLRACFVRFM). Residues 595-613 (NHCWCWDLEAGFPSYAEFD) lie on the Cytoplasmic side of the membrane. Residues 614–634 (ISGNVLGLIFNQGMIWMGSFY) traverse the membrane as a helical segment. At 635-637 (APG) the chain is on the extracellular side. Residues 638–660 (LVGINVLRLLTSMYFQCWAVMSS) traverse the membrane as a helical segment. Residues 661–674 (NVPHERVFKASRSN) lie on the Cytoplasmic side of the membrane. Residues 675-698 (NFYMGLLLLVLFLSLLPVAYTVMS) traverse the membrane as a helical segment. Residues 699-741 (LPPSFDCGPFSGKNRMYDVLHETIENDFPKFLGKIFAFLANPG) lie on the Extracellular side of the membrane. The chain crosses the membrane as a helical span at residues 742–775 (LIIPAILLMFLAIYYLNSVSKSLSRANAQLRKKI). Topologically, residues 776 to 888 (QALREVEKNH…SGKRTQRPHN (113 aa)) are cytoplasmic. Residues 813–888 (LTKEEPTSHS…SGKRTQRPHN (76 aa)) are disordered. Polar residues-rich tracts occupy residues 836-851 (PHTS…STSW) and 866-881 (GQPQ…PSGK).

This sequence belongs to the TMC family. In terms of assembly, forms the MET channel composed of TMC dimer (TMC1 or TMC2), TMIE, TOMT, CIB (CIB2 or CIB3), LHFPL5 and PDH15. The interaction of TMC1 and TMC2 with TOMT is required for the transportation of TMC1/2 into the stereocilia of hair cells. Interacts (via N-terminus) with both isoforms CD1 and CD3 of PCDH15. Can form a heterodimer with TMC1, TMC5 or TMC7. Inner ear and testis. Expressed in cochlear inner and outer hair cells and vestibular organ hair cells.

The protein localises to the cell membrane. It carries out the reaction Ca(2+)(in) = Ca(2+)(out). Functionally, pore-forming subunit of the mechanotransducer (MET) non-selective cation channel complex located at the tips of stereocilia of cochlear hair cells and that mediates sensory transduction in the auditory system. The MET complex is composed of two dimeric pore-forming ion-conducting transmembrane TMC (TMC1 or TMC2) subunits, several auxiliary proteins including LHFPL5, TMIE, CIB2/3 and TOMT, the tip-link PCDH15, and possibly the PIEZO subunits. MET channel is activated by tension in the tip-link extending from the side wall of one stereocilium to the tip of the adjacent shorter stereocilium, where the channel is located. TMC2 MET channel is highly permeable to calcium and likely transports monovalent cations. Also involved in vestibular hair cell transduction current of the mammalian inner ear. The sequence is that of Transmembrane channel-like protein 2 from Mus musculus (Mouse).